The following is a 458-amino-acid chain: Protein RICE SALT SENSITIVE 3 (458 aa).

Gly residues predominate over residues 1 to 17 (MVGSGAAGGGGGGGGGG). Disordered stretches follow at residues 1–21 (MVGS…DHAR), 220–325 (TSPS…PEGD), 354–374 (GGGA…GHGG), and 386–458 (SHSN…TFLE). The segment covering 220-232 (TSPSPSSFPLKQQ) has biased composition (low complexity). A compositionally biased stretch (pro residues) spans 245–262 (HAPPQLPPGASPLFPPGP). Over residues 308–317 (QQPMAAPQQH) the composition is skewed to low complexity. The segment covering 413–436 (SSSTTSTSPSVSASTAPAPPQQQQ) has biased composition (low complexity).

In terms of assembly, interacts with BHLH094, BHLH089, TIFY11A/JAZ9 and TIFY11C/JAZ11. Forms a ternary complex with TIFY11A/JAZ9 and BHLH094 in the nucleus. In terms of tissue distribution, expressed in root tips. Expressed at high levels in the meristematic zone and at low levels in the elongation zone of the root tip.

The protein localises to the nucleus. It is found in the cytoplasm. Involved in the repression of jasmonate (JA)-induced genes. Forms a ternary complex with TIFY11A/JAZ9 and BHLH094 to negatively regulate JA-responsive genes. Involved in transcriptional regulation in the root tip. Plays a regulatory role in root cell elongation. Regulates root cell elongation during salt stress. In Oryza sativa subsp. japonica (Rice), this protein is Protein RICE SALT SENSITIVE 3.